Here is an 85-residue protein sequence, read N- to C-terminus: Large ribosomal subunit protein bL27 (85 aa).

Residues 1–21 (MAHKKGVGSSRNGRDSDGQRL) are disordered.

This sequence belongs to the bacterial ribosomal protein bL27 family.

This is Large ribosomal subunit protein bL27 from Geobacter sp. (strain M21).